A 214-amino-acid chain; its full sequence is MSTKVPIYLKRGSRKGKKEKLRDLLSSDMISPPLGDFRHTIHIGSGGGDDMFGDISFLQGKFHLLPGTAVEEAEEDGSFDLPFQFTRTTTVCGRELPDGLSPLLKNAISLPVIGGPQALTLPTAQAPPKPPRLHLESPQPSPQPSPQGAGNVDVWRIPEAGSPHNGMSPEPEAEEPFLSHASSLLSLHVDLGPSILDDVLQIMDHDLGRVQIPT.

S2 carries the N-acetylserine modification. In terms of domain architecture, CRIB spans 30-44 (ISPPLGDFRHTIHIG). Residues S31, S101, S137, S141, and S145 each carry the phosphoserine modification. The interval 119–177 (LTLPTAQAPPKPPRLHLESPQPSPQPSPQGAGNVDVWRIPEAGSPHNGMSPEPEAEEPF) is disordered.

The protein belongs to the BORG/CEP family. In terms of assembly, interacts with CDC42 and RHOQ in a GTP-dependent manner, and with SEPT7.

It is found in the endomembrane system. The protein localises to the cytoplasm. It localises to the cytoskeleton. Probably involved in the organization of the actin cytoskeleton. May act downstream of CDC42 to induce actin filament assembly leading to cell shape changes. Induces pseudopodia formation in fibroblasts in a CDC42-dependent manner. This is Cdc42 effector protein 2 (Cdc42ep2) from Mus musculus (Mouse).